Here is a 368-residue protein sequence, read N- to C-terminus: tRNA-specific 2-thiouridylase MnmA (368 aa).

Residues Ala10–Ser17 and Met36 contribute to the ATP site. Cys106 functions as the Nucleophile in the catalytic mechanism. Cys106 and Cys203 are disulfide-bonded. Gly130 contributes to the ATP binding site. The segment at Lys152–Gln154 is interaction with tRNA. The Cysteine persulfide intermediate role is filled by Cys203. Residues Arg313–Tyr314 form an interaction with tRNA region.

Belongs to the MnmA/TRMU family.

Its subcellular location is the cytoplasm. The catalysed reaction is S-sulfanyl-L-cysteinyl-[protein] + uridine(34) in tRNA + AH2 + ATP = 2-thiouridine(34) in tRNA + L-cysteinyl-[protein] + A + AMP + diphosphate + H(+). Functionally, catalyzes the 2-thiolation of uridine at the wobble position (U34) of tRNA, leading to the formation of s(2)U34. This is tRNA-specific 2-thiouridylase MnmA from Cytophaga hutchinsonii (strain ATCC 33406 / DSM 1761 / CIP 103989 / NBRC 15051 / NCIMB 9469 / D465).